The sequence spans 372 residues: Actin-related protein T3 (372 aa).

This sequence belongs to the actin family. Interacts with PFN3. As to expression, ubiquitously expressed.

The protein resides in the cytoplasm. It is found in the cytoskeleton. It localises to the nucleus. This chain is Actin-related protein T3 (ACTRT3), found in Homo sapiens (Human).